The following is a 516-amino-acid chain: MTTPSHAPAVDLATAKDAVVQHLSRLFEFTTGPQGGPARLGFAGAVLITAGGLGAGSVRQHDPLLESIHMSWLRFGHGLVLSSILLWTGVGVMLLAWLGLGRRVLAGEATEFTMRATTVIWLAPLLLSVPVFSRDTYSYLAQGALLRDGLDPYAVGPVGNPNALLDDVSPIWTITTAPYGPAFILVAKFVTVIVGNNVVAGTMLLRLCMLPGLALLVWATPRLASHLGTHGPTALWICVLNPLVLIHLMGGVHNEMLMVGLMTAGIALTVQGRNVAGIILITVAIAVKATAGIALPFLVWVWLRHLRERRGYRPVQAFLAAAAISLLIFVAVFAVLSAVAGVGLGWLTALAGSVKIINWLTVPTGAANVIHALGRGLFTVDFYTLLRITRLIGIVIIAVSLPLLWWRFRRDDRAALTGVAWSMLIVVLFVPAALPWYYSWPLAVAAPLAQARRAIAAIAGLSTWVMVIFKPDGSHGMYSWLHFWIATACALTAWYVLYRSPDRRGVQAATPVVNTP.

At T2 the chain carries N-acetylthreonine. 13 helical membrane-spanning segments follow: residues A38–V58, G78–L98, F112–F132, I174–V194, V198–W218, P232–V252, I278–L298, L326–W346, L350–I370, L385–W405, A414–L434, A454–S474, and M477–L497.

It belongs to the MptA/B family.

Its subcellular location is the membrane. In terms of biological role, involved in the latter stages of the biosynthesis of the alpha-(1-&gt;6) mannan core of lipomannan (LM). Catalyzes the addition of alpha-(1-&gt;6)-mannose residue. This chain is Alpha-(1-&gt;6)-mannopyranosyltransferase A (mptA), found in Mycobacterium tuberculosis (strain ATCC 25618 / H37Rv).